The sequence spans 329 residues: tRNA N6-adenosine threonylcarbamoyltransferase (329 aa).

Fe cation is bound by residues His107 and His111. Residues 129-133, Asp162, Gly175, and Asn268 each bind substrate; that span reads LVSGG. Asp296 serves as a coordination point for Fe cation.

Belongs to the KAE1 / TsaD family. It depends on Fe(2+) as a cofactor.

It localises to the cytoplasm. It catalyses the reaction L-threonylcarbamoyladenylate + adenosine(37) in tRNA = N(6)-L-threonylcarbamoyladenosine(37) in tRNA + AMP + H(+). Required for the formation of a threonylcarbamoyl group on adenosine at position 37 (t(6)A37) in tRNAs that read codons beginning with adenine. Is involved in the transfer of the threonylcarbamoyl moiety of threonylcarbamoyl-AMP (TC-AMP) to the N6 group of A37, together with TsaE and TsaB. TsaD likely plays a direct catalytic role in this reaction. The sequence is that of tRNA N6-adenosine threonylcarbamoyltransferase from Nitratiruptor sp. (strain SB155-2).